The sequence spans 598 residues: Dihydroxy-acid dehydratase astD, mitochondrial (598 aa).

A mitochondrion-targeting transit peptide spans 1–111; sequence MFASRIRSRA…HRAGLVPMRF (111 aa). Residues 23–50 are disordered; the sequence is RLPASTTGRRYKSDETLNRVSSKITQPK. Positions 40-50 are enriched in polar residues; it reads NRVSSKITQPK. Cys-86 provides a ligand contact to [2Fe-2S] cluster. Position 118 (Asp-118) interacts with Mg(2+). Cys-159 is a [2Fe-2S] cluster binding site. Asp-160 lines the Mg(2+) pocket. Cys-232 serves as a coordination point for [2Fe-2S] cluster. Mg(2+) is bound at residue Glu-485. Catalysis depends on Ser-511, which acts as the Proton acceptor.

The protein belongs to the IlvD/Edd family. It depends on [2Fe-2S] cluster as a cofactor. Requires Mg(2+) as cofactor.

The protein localises to the mitochondrion. It catalyses the reaction (2R)-2,3-dihydroxy-3-methylbutanoate = 3-methyl-2-oxobutanoate + H2O. It carries out the reaction (2R,3R)-2,3-dihydroxy-3-methylpentanoate = (S)-3-methyl-2-oxopentanoate + H2O. The protein operates within amino-acid biosynthesis; L-isoleucine biosynthesis; L-isoleucine from 2-oxobutanoate: step 3/4. It participates in amino-acid biosynthesis; L-valine biosynthesis; L-valine from pyruvate: step 3/4. Its activity is regulated as follows. DHAD activity is not inhibited by the dihydroxyacid dehydratase inhibitor aspterric acid (AA). Dihydroxyacid dehydratase; part of the gene cluster that mediates the biosynthesis of the sesquiterpenoid aspterric acid (AA), an inhibitor of dihydroxy-acid dehydratase (DHAD) effective as an herbicide. Performs the third step in the common pathway leading to biosynthesis of branched-chain amino acids. Catalyzes the dehydration of (2R,3R)-2,3-dihydroxy-3-methylpentanoate (2,3-dihydroxy-3-methylvalerate) into 2-oxo-3-methylpentanoate (2-oxo-3-methylvalerate) and of (2R)-2,3-dihydroxy-3-methylbutanoate (2,3-dihydroxyisovalerate) into 2-oxo-3-methylbutanoate (2-oxoisovalerate), the penultimate precursor to L-isoleucine and L-valine, respectively. AstD confers self-resistance in the presence of the dihydroxyacid dehydratase inhibitor aspterric acid (AA) produced by the ast cluster. In Aspergillus terreus (strain NIH 2624 / FGSC A1156), this protein is Dihydroxy-acid dehydratase astD, mitochondrial.